Reading from the N-terminus, the 156-residue chain is Calcium-binding protein A (156 aa).

EF-hand domains lie at 4–39, 40–75, 80–115, and 118–153; these read AITK…TGSK, DPLR…VAAK, AINN…NNPD, and APLM…YKSL. Positions 17, 19, 21, 23, 28, 53, 55, 57, 64, 93, 95, 97, 99, 104, 131, 133, 135, and 142 each coordinate Ca(2+).

This is Calcium-binding protein A (cbpA) from Dictyostelium discoideum (Social amoeba).